The sequence spans 305 residues: uncharacterized protein (305 aa).

Positions serine 208–aspartate 236 are disordered. Residues valine 215 to glycine 225 are compositionally biased toward basic residues.

This is an uncharacterized protein from Bacillus subtilis (strain 168).